Reading from the N-terminus, the 308-residue chain is Mycothiol acetyltransferase (308 aa).

N-acetyltransferase domains are found at residues 8-155 (RDVD…PRLR) and 160-308 (VQVR…RRAR). Position 39 (glutamate 39) interacts with 1D-myo-inositol 2-(L-cysteinylamino)-2-deoxy-alpha-D-glucopyranoside. 84 to 86 (LVV) contributes to the acetyl-CoA binding site. The 1D-myo-inositol 2-(L-cysteinylamino)-2-deoxy-alpha-D-glucopyranoside site is built by glutamate 187, lysine 226, and glutamate 240. Acetyl-CoA-binding positions include 244-246 (LGI) and 251-257 (QGLGLGR). Tyrosine 278 lines the 1D-myo-inositol 2-(L-cysteinylamino)-2-deoxy-alpha-D-glucopyranoside pocket.

Belongs to the acetyltransferase family. MshD subfamily. Monomer.

The enzyme catalyses 1D-myo-inositol 2-(L-cysteinylamino)-2-deoxy-alpha-D-glucopyranoside + acetyl-CoA = mycothiol + CoA + H(+). Catalyzes the transfer of acetyl from acetyl-CoA to desacetylmycothiol (Cys-GlcN-Ins) to form mycothiol. In Geodermatophilus obscurus (strain ATCC 25078 / DSM 43160 / JCM 3152 / CCUG 61914 / KCC A-0152 / KCTC 9177 / NBRC 13315 / NRRL B-3577 / G-20), this protein is Mycothiol acetyltransferase.